The chain runs to 389 residues: Probable acyl-CoA dehydrogenase fadE25 (389 aa).

It belongs to the acyl-CoA dehydrogenase family. Requires FAD as cofactor.

It catalyses the reaction a 2,3-saturated acyl-CoA + A = a 2,3-dehydroacyl-CoA + AH2. The polypeptide is Probable acyl-CoA dehydrogenase fadE25 (fadE25) (Mycobacterium leprae (strain TN)).